The primary structure comprises 130 residues: Small ribosomal subunit protein uS8 (130 aa).

This sequence belongs to the universal ribosomal protein uS8 family. In terms of assembly, part of the 30S ribosomal subunit. Contacts proteins S5 and S12.

One of the primary rRNA binding proteins, it binds directly to 16S rRNA central domain where it helps coordinate assembly of the platform of the 30S subunit. The chain is Small ribosomal subunit protein uS8 from Mannheimia succiniciproducens (strain KCTC 0769BP / MBEL55E).